We begin with the raw amino-acid sequence, 302 residues long: Methionyl-tRNA formyltransferase (302 aa).

Residue serine 107–proline 110 participates in (6S)-5,6,7,8-tetrahydrofolate binding.

The protein belongs to the Fmt family.

It carries out the reaction L-methionyl-tRNA(fMet) + (6R)-10-formyltetrahydrofolate = N-formyl-L-methionyl-tRNA(fMet) + (6S)-5,6,7,8-tetrahydrofolate + H(+). In terms of biological role, attaches a formyl group to the free amino group of methionyl-tRNA(fMet). The formyl group appears to play a dual role in the initiator identity of N-formylmethionyl-tRNA by promoting its recognition by IF2 and preventing the misappropriation of this tRNA by the elongation apparatus. This chain is Methionyl-tRNA formyltransferase, found in Leifsonia xyli subsp. xyli (strain CTCB07).